The chain runs to 234 residues: MNSTSDDNPRPALRALTPLEARVLGVLFEKQHTVPDTYPLSLNSLAAGCNQKTSRSPVMNVSESEILDAINTLKRLSLVLEGSSSRVPRYEHNIERVLGLPRQSAALLTALLLRGPQTAAELRLATSRLHSFADTSSVEAFLEELAGNDPPRVVKLPRTPGERESRWMHLLCGEPSAEQLRGAALSDEPLPPGELEGLRAQQRELSERVERLEALVVHLAGELGVSLDDLKGRL.

It belongs to the UPF0502 family.

The polypeptide is UPF0502 protein Bphy_5360 (Paraburkholderia phymatum (strain DSM 17167 / CIP 108236 / LMG 21445 / STM815) (Burkholderia phymatum)).